Consider the following 205-residue polypeptide: Ras-related protein Rab-18-B (205 aa).

Residues serine 17, glycine 20, lysine 21, serine 22, serine 23, aspartate 34, proline 35, threonine 40, glycine 66, lysine 123, aspartate 125, and alanine 152 each contribute to the GTP site. Position 22 (serine 22) interacts with Mg(2+). 2 consecutive short sequence motifs (switch) follow at residues 31 to 45 (DTFD…GVDF) and 63 to 80 (DTAG…YYRG). Threonine 40 contacts Mg(2+). Cysteine 198 is lipidated: S-palmitoyl cysteine. A Cysteine methyl ester modification is found at cysteine 202. A lipid anchor (S-geranylgeranyl cysteine) is attached at cysteine 202. Residues 203-205 (SLV) constitute a propeptide, removed in mature form.

It belongs to the small GTPase superfamily. Rab family. Mg(2+) serves as cofactor.

The protein resides in the endoplasmic reticulum membrane. It is found in the golgi apparatus. The protein localises to the cis-Golgi network membrane. Its subcellular location is the lipid droplet. It localises to the apical cell membrane. It carries out the reaction GTP + H2O = GDP + phosphate + H(+). Regulated by guanine nucleotide exchange factors (GEFs) which promote the exchange of bound GDP for free GTP. Regulated by GTPase activating proteins (GAPs) which increase the GTP hydrolysis activity at the ER membrane. Inhibited by GDP dissociation inhibitors (GDIs) which prevent Rab-GDP dissociation. In terms of biological role, the small GTPases Rab are key regulators of intracellular membrane trafficking, from the formation of transport vesicles to their fusion with membranes. Rabs cycle between an inactive GDP-bound form and an active GTP-bound form that is able to recruit to membranes different sets of downstream effectors directly responsible for vesicle formation, movement, tethering and fusion. Required for the localization of ZFYVE1 to lipid droplets and for its function in mediating the formation of endoplasmic reticulum-lipid droplets (ER-LD) contacts. Also required for maintaining endoplasmic reticulum structure. Plays a role in apical endocytosis/recycling. Plays a key role in eye and brain development and neurodegeneration. The sequence is that of Ras-related protein Rab-18-B (rab18b) from Danio rerio (Zebrafish).